The sequence spans 356 residues: Alanine racemase (356 aa).

Catalysis depends on K34, which acts as the Proton acceptor; specific for D-alanine. Residue K34 is modified to N6-(pyridoxal phosphate)lysine. Residue R129 coordinates substrate. The Proton acceptor; specific for L-alanine role is filled by Y253. Residue M301 coordinates substrate.

This sequence belongs to the alanine racemase family. The cofactor is pyridoxal 5'-phosphate.

The enzyme catalyses L-alanine = D-alanine. The protein operates within amino-acid biosynthesis; D-alanine biosynthesis; D-alanine from L-alanine: step 1/1. In terms of biological role, catalyzes the interconversion of L-alanine and D-alanine. May also act on other amino acids. The polypeptide is Alanine racemase (alr) (Nitrosococcus oceani (strain ATCC 19707 / BCRC 17464 / JCM 30415 / NCIMB 11848 / C-107)).